A 74-amino-acid polypeptide reads, in one-letter code: Protein krueppel (74 aa).

C2H2-type zinc fingers lie at residues Glu-1–His-4, Phe-10–His-32, Tyr-38–His-60, and Tyr-66–Arg-74.

This sequence belongs to the krueppel C2H2-type zinc-finger protein family.

The protein resides in the nucleus. Its function is as follows. Krueppel is a gap class segmentation protein. The sequence is that of Protein krueppel (Kr) from Euscelis plebejus (Leafhopper).